Here is a 411-residue protein sequence, read N- to C-terminus: Signal-transducing adaptor protein 2 (411 aa).

A PH domain is found at 20–120 (HYYESFLEKK…GFILTVVELR (101 aa)). Tyr-22 carries the post-translational modification Phosphotyrosine. The region spanning 152–248 (WCFLQVSRLE…RALVPFLLDE (97 aa)) is the SH2 domain. Position 250 is a phosphotyrosine; by PTK6 (Tyr-250). Positions 291 to 320 (VPVSVSSQEDKLPQLPPLPQLPDTDENYVT) are disordered. A phosphotyrosine mark is found at Tyr-318 and Tyr-330. Positions 338–364 (SSQAVPLKPKKPARLPAKPPKPSVVPK) are disordered. A coiled-coil region spans residues 390-410 (TRLGDITAELEEKLQKRRALE).

Interacts with PTK6 and CSF1R. Post-translationally, phosphorylated on tyrosine. Phosphorylated by PTK6 at Tyr-250 modulates PTK6-mediated STAT3 activation. Widely expressed.

The protein resides in the cytoplasm. It localises to the membrane. Substrate of protein kinase PTK6. May play a regulatory role in the acute-phase response in systemic inflammation and may modulate STAT3 activity. The polypeptide is Signal-transducing adaptor protein 2 (Stap2) (Mus musculus (Mouse)).